A 500-amino-acid chain; its full sequence is Glucose-1-phosphate adenylyltransferase small subunit 1, chloroplastic/amyloplastic (500 aa).

Residues 1-50 constitute a chloroplast transit peptide; sequence MAMMAMGAASWAPIPAPARAAAAFYPGRDLAAARRRRGAAARRPFVFTPR.

It belongs to the bacterial/plant glucose-1-phosphate adenylyltransferase family. As to quaternary structure, heterotetramer composed of two small and two large subunits. In terms of tissue distribution, expressed in leaves.

The protein resides in the plastid. Its subcellular location is the chloroplast. The protein localises to the amyloplast. It catalyses the reaction alpha-D-glucose 1-phosphate + ATP + H(+) = ADP-alpha-D-glucose + diphosphate. It functions in the pathway glycan biosynthesis; starch biosynthesis. Activated by 3'phosphoglycerate, inhibited by orthophosphate. Allosteric regulation. In terms of biological role, involved in synthesis of starch. Catalyzes the synthesis of ADP-glucose, a molecule that serves as an activated glycosyl donor for alpha-1,4-glucan synthesis. Essential for starch synthesis in leaf chloroplasts and endosperm amyloplasts. The chain is Glucose-1-phosphate adenylyltransferase small subunit 1, chloroplastic/amyloplastic from Oryza sativa subsp. japonica (Rice).